The following is a 183-amino-acid chain: Dermatopontin (183 aa).

Q1 bears the Pyrrolidone carboxylic acid mark. Y5 is subject to Sulfotyrosine. 4 consecutive repeat copies span residues 8–61, 52–57, 62–117, and 107–112. The 2 X 53-55 AA tandem repeats stretch occupies residues 8-117; that stretch reads PYQQYHDYSD…REWQFYCCRY (110 aa). 5 disulfides stabilise this stretch: C32-C59, C72-C114, C88-C115, C121-C178, and C125-C171. The segment at 52 to 168 is 3 X 6 AA tandem repeats of D-R-[EQ]-W-[NQK]-[FY]; the sequence is DRQWNYACMP…AVERDRQWKF (117 aa). Sulfotyrosine is present on residues Y144, Y146, Y148, and Y149. Residues 163–168 form a 2-3 repeat; it reads DRQWKF. Sulfotyrosine is present on Y176.

It belongs to the dermatopontin family. In terms of assembly, interacts with TGFB1, DCN and collagen. Post-translationally, sulfated on tyrosine residue(s). In terms of tissue distribution, detected in skin, skeletal muscle, heart, lung, articular cartilage, long bone and calvaria. Smaller amounts detected in kidney. Not detected in brain, liver or spleen.

It is found in the secreted. The protein localises to the extracellular space. The protein resides in the extracellular matrix. In terms of biological role, seems to mediate adhesion by cell surface integrin binding. May serve as a communication link between the dermal fibroblast cell surface and its extracellular matrix environment. Enhances TGFB1 activity. Inhibits cell proliferation. Accelerates collagen fibril formation, and stabilizes collagen fibrils against low-temperature dissociation. In Sus scrofa (Pig), this protein is Dermatopontin (DPT).